Reading from the N-terminus, the 156-residue chain is ATP synthase subunit b (156 aa).

The helical transmembrane segment at 7 to 27 threads the bilayer; that stretch reads LFAQMIVFFVLWWVVARFVWP.

Belongs to the ATPase B chain family. In terms of assembly, F-type ATPases have 2 components, F(1) - the catalytic core - and F(0) - the membrane proton channel. F(1) has five subunits: alpha(3), beta(3), gamma(1), delta(1), epsilon(1). F(0) has three main subunits: a(1), b(2) and c(10-14). The alpha and beta chains form an alternating ring which encloses part of the gamma chain. F(1) is attached to F(0) by a central stalk formed by the gamma and epsilon chains, while a peripheral stalk is formed by the delta and b chains.

It localises to the cell inner membrane. F(1)F(0) ATP synthase produces ATP from ADP in the presence of a proton or sodium gradient. F-type ATPases consist of two structural domains, F(1) containing the extramembraneous catalytic core and F(0) containing the membrane proton channel, linked together by a central stalk and a peripheral stalk. During catalysis, ATP synthesis in the catalytic domain of F(1) is coupled via a rotary mechanism of the central stalk subunits to proton translocation. In terms of biological role, component of the F(0) channel, it forms part of the peripheral stalk, linking F(1) to F(0). This chain is ATP synthase subunit b, found in Polynucleobacter necessarius subsp. necessarius (strain STIR1).